Consider the following 1123-residue polypeptide: Phytochrome 1 (1123 aa).

Low complexity predominate over residues 1–15 (MSTPKKTYSSTSSAK). The tract at residues 1 to 20 (MSTPKKTYSSTSSAKSKAHS) is disordered. Residues 216–395 (DIGLLCDTVV…VFGLQLNMEV (180 aa)) enclose the GAF domain. Cys-321 provides a ligand contact to phytochromobilin. 2 PAS domains span residues 610-681 (VANE…LRGE) and 744-815 (DYKT…TKFM). The region spanning 895–1115 (YIRQEIKNPL…VVNVELPMAQ (221 aa)) is the Histidine kinase domain.

The protein belongs to the phytochrome family. In terms of assembly, homodimer. Contains one covalently linked phytochromobilin chromophore.

Its subcellular location is the cytoplasm. In terms of biological role, regulatory photoreceptor which exists in two forms that are reversibly interconvertible by light: the Pr form that absorbs maximally in the red region of the spectrum and the Pfr form that absorbs maximally in the far-red region. Photoconversion of Pr to Pfr induces an array of morphogenetic responses, whereas reconversion of Pfr to Pr cancels the induction of those responses. Pfr controls the expression of a number of nuclear genes including those encoding the small subunit of ribulose-bisphosphate carboxylase, chlorophyll A/B binding protein, protochlorophyllide reductase, rRNA, etc. It also controls the expression of its own gene(s) in a negative feedback fashion. Mediates chloroplast avoidance movement in cytoplasm. This chain is Phytochrome 1 (PHY1), found in Physcomitrium patens (Spreading-leaved earth moss).